A 452-amino-acid polypeptide reads, in one-letter code: MDRRIFGLENEYGVTCTFRGQRRLSPDEVARYLFRRVVSWGRSSNVFLRNGARLYLDVGSHPEYATPECDNVVELVTHDKAGERILEGLLVDAEKRLREEGIAGDIYLFKNNTDSAGNSYGCHENYLVGRHGEFGRLADVLIPFLVTRQIVCGAGKVLQTPRGAVYCVSQRAEHIWEGVSSATTRSRPIINTRDEPHADAERFRRLHVIVGDSNMSETTMLLKVGATDLVLRMIEAGTVMRDLSLENPIRAIREVSHDMTGRRRVRLANGREASSLEIQQEYLSKARDFVDRRGGDEISHRVLELWERTLNAVETGNLDLVAREIDWVTKYQLIERYRKKYDLPLSSPRVAQLDLAYHDVHRRRGLFYLLQKRGAVERVASDLKIFEAKSVPPQTTRARLRGEFIRKAQEKRRDFTVDWVHLKLNDQAQRTVLCKDPFRSVDERVDKLIAGM.

Position 9 (Glu-9) interacts with Mg(2+). Residue Arg-53 coordinates ATP. Residue Tyr-55 coordinates Mg(2+). The active-site Proton acceptor is the Asp-57. Glu-63 lines the Mg(2+) pocket. Residues Thr-66 and Trp-419 each coordinate ATP.

It belongs to the Pup ligase/Pup deamidase family. Pup-conjugating enzyme subfamily.

It carries out the reaction ATP + [prokaryotic ubiquitin-like protein]-L-glutamate + [protein]-L-lysine = ADP + phosphate + N(6)-([prokaryotic ubiquitin-like protein]-gamma-L-glutamyl)-[protein]-L-lysine.. It participates in protein degradation; proteasomal Pup-dependent pathway. The protein operates within protein modification; protein pupylation. In terms of biological role, catalyzes the covalent attachment of the prokaryotic ubiquitin-like protein modifier Pup to the proteasomal substrate proteins, thereby targeting them for proteasomal degradation. This tagging system is termed pupylation. The ligation reaction involves the side-chain carboxylate of the C-terminal glutamate of Pup and the side-chain amino group of a substrate lysine. The polypeptide is Pup--protein ligase (Streptosporangium roseum (strain ATCC 12428 / DSM 43021 / JCM 3005 / KCTC 9067 / NCIMB 10171 / NRRL 2505 / NI 9100)).